We begin with the raw amino-acid sequence, 113 residues long: Large ribosomal subunit protein P2B (113 aa).

Residues 66-113 (PSGGGAIDMGAPAAVAGGGAAPAEEAKKEEKVEEKEESDEDMGFSLFD) are disordered. Positions 89–99 (EEAKKEEKVEE) are enriched in basic and acidic residues.

It belongs to the eukaryotic ribosomal protein P1/P2 family. In terms of assembly, P1 and P2 exist as dimers at the large ribosomal subunit. In terms of processing, phosphorylated.

Plays an important role in the elongation step of protein synthesis. This chain is Large ribosomal subunit protein P2B (RPP2B), found in Zea mays (Maize).